Reading from the N-terminus, the 138-residue chain is Large ribosomal subunit protein uL14 (138 aa).

This sequence belongs to the universal ribosomal protein uL14 family. In terms of assembly, part of the 50S ribosomal subunit. Forms a cluster with proteins L3 and L24e, part of which may contact the 16S rRNA in 2 intersubunit bridges.

Binds to 23S rRNA. Forms part of two intersubunit bridges in the 70S ribosome. In Hyperthermus butylicus (strain DSM 5456 / JCM 9403 / PLM1-5), this protein is Large ribosomal subunit protein uL14.